A 185-amino-acid chain; its full sequence is Cuticle protein 18.6, isoform A (185 aa).

7 tandem repeats follow at residues 21 to 24 (AAPA), 33 to 36 (AAPV), 41 to 44 (AAPV), 54 to 57 (AAPA), 133 to 136 (AAPV), 139 to 142 (AAPV), and 150 to 153 (AAPV). The Chitin-binding type R&amp;R domain occupies 64–134 (HPQYSFAYNV…KEAGAHPAAA (71 aa)).

Component of the cuticle of migratory locust which contains more than 100 different structural proteins. The polypeptide is Cuticle protein 18.6, isoform A (Locusta migratoria (Migratory locust)).